The following is a 277-amino-acid chain: Bifunctional protein FolD (277 aa).

Residues 160 to 162, Ser185, and Ile226 each bind NADP(+); that span reads GAS.

This sequence belongs to the tetrahydrofolate dehydrogenase/cyclohydrolase family. As to quaternary structure, homodimer.

It carries out the reaction (6R)-5,10-methylene-5,6,7,8-tetrahydrofolate + NADP(+) = (6R)-5,10-methenyltetrahydrofolate + NADPH. The catalysed reaction is (6R)-5,10-methenyltetrahydrofolate + H2O = (6R)-10-formyltetrahydrofolate + H(+). It functions in the pathway one-carbon metabolism; tetrahydrofolate interconversion. Functionally, catalyzes the oxidation of 5,10-methylenetetrahydrofolate to 5,10-methenyltetrahydrofolate and then the hydrolysis of 5,10-methenyltetrahydrofolate to 10-formyltetrahydrofolate. The polypeptide is Bifunctional protein FolD (Vesicomyosocius okutanii subsp. Calyptogena okutanii (strain HA)).